Consider the following 312-residue polypeptide: Nodulation protein D 2 (312 aa).

In terms of domain architecture, HTH lysR-type spans 6-63 (LDLNLLVALDALMTKRSVTAAARSINLSQPAMSAAIARLRTYFGDDLFTMRGRELIPT). The segment at residues 23–42 (VTAAARSINLSQPAMSAAIA) is a DNA-binding region (H-T-H motif).

Belongs to the LysR transcriptional regulatory family.

Its function is as follows. Represses the expression of the nodABCIJ-nolO-noeI operon. This chain is Nodulation protein D 2 (nodD2), found in Sinorhizobium fredii (strain NBRC 101917 / NGR234).